A 230-amino-acid chain; its full sequence is Acetyltransferase (230 aa).

An N-acetyltransferase domain is found at 143 to 230 (RYLDGKVICD…RVAVYKARQT (88 aa)).

It participates in mycotoxin biosynthesis. Functionally, acetyltransferase; part of the satratoxin SC3 cluster involved in the biosynthesis of satratoxins, trichothecene mycotoxins that are associated with human food poisonings. Satratoxins are suggested to be made by products of multiple gene clusters (SC1, SC2 and SC3) that encode 21 proteins in all, including polyketide synthases, acetyltransferases, and other enzymes expected to modify the trichothecene skeleton. SC1 encodes 10 proteins, SAT1 to SAT10. The largest are SAT8, which encodes a putative polyketide synthase (PKS) with a conventional non-reducing architecture, and SAT10, a putative protein containing four ankyrin repeats and thus may be involved in protein scaffolding. The putative short-chain reductase SAT3 may assist the PKS in some capacity. SAT6 contains a secretory lipase domain and acts probably as a trichothecene esterase. SAT5 encodes a putative acetyltransferase, and so, with SAT6, may affect endogenous protection from toxicity. The probable transcription factor SAT9 may regulate the expression of the SC1 cluster. SC2 encodes proteins SAT11 to SAT16, the largest of which encodes the putative reducing PKS SAT13. SAT11 is a cytochrome P450 monooxygenase, while SAT14 and SAT16 are probable acetyltransferases. The SC2 cluster may be regulated by the transcription factor SAT15. SC3 is a small cluster that encodes 5 proteins, SAT17 to SAT21. SAT21 is a putative MFS-type transporter which may have a role in exporting secondary metabolites. The four other proteins putatively encoded in SC3 include the taurine hydroxylase-like protein SAT17, the O-methyltransferase SAT18, the acetyltransferase SAT19, and the Cys6-type zinc finger SAT20, the latter being probably involved in regulation of SC3 expression. The sequence is that of Acetyltransferase from Stachybotrys chartarum (strain CBS 109288 / IBT 7711) (Toxic black mold).